The primary structure comprises 198 residues: Recombination protein RecR (198 aa).

A C4-type zinc finger spans residues 58–73 (CLNCGNVGTSDICDIC). Residues 81–175 (GELCVVEDVA…RLTSLAQGVP (95 aa)) enclose the Toprim domain.

It belongs to the RecR family.

Functionally, may play a role in DNA repair. It seems to be involved in an RecBC-independent recombinational process of DNA repair. It may act with RecF and RecO. This Ruegeria pomeroyi (strain ATCC 700808 / DSM 15171 / DSS-3) (Silicibacter pomeroyi) protein is Recombination protein RecR.